Reading from the N-terminus, the 79-residue chain is Small ribosomal subunit protein bS16 (79 aa).

This sequence belongs to the bacterial ribosomal protein bS16 family.

In Nitratidesulfovibrio vulgaris (strain DSM 19637 / Miyazaki F) (Desulfovibrio vulgaris), this protein is Small ribosomal subunit protein bS16.